Here is a 280-residue protein sequence, read N- to C-terminus: Four and a half LIM domains protein 3 (280 aa).

Ser2 carries the post-translational modification N-acetylserine. The C4-type zinc-finger motif lies at 7–31 (CAKCSESLYGRKYIQTDDGPYCVPC). LIM zinc-binding domains are found at residues 40 to 92 (CAEC…CNDC) and 101 to 153 (CSAC…CVPC). Position 157 is an N6-acetyllysine (Lys157). LIM zinc-binding domains follow at residues 162–212 (CARC…CVTC) and 221–275 (CSSC…CQGC). The residue at position 235 (Lys235) is an N6-acetyllysine.

Interacts with SOX15; the interaction recruits FHL3 to FOXK1 promoters where it acts as a transcriptional coactivator of FOXK1.

The protein localises to the nucleus. Its subcellular location is the cytoplasm. Recruited by SOX15 to FOXK1 promoters where it acts as a transcriptional coactivator of FOXK1. The sequence is that of Four and a half LIM domains protein 3 (FHL3) from Bos taurus (Bovine).